The chain runs to 401 residues: Ureide permease 4 (401 aa).

Over 1-10 (MYVVESKAGA) the chain is Extracellular. Residues 11–31 (IGCMILSLCCLGSWPAILTLL) traverse the membrane as a helical segment. The Cytoplasmic segment spans residues 32 to 40 (ERRGRLPQH). A helical membrane pass occupies residues 41-61 (TFLDFATANLLAAIVIAFSLG). Over 62–81 (EIGKSTFLKPDFTTQLPQDN) the chain is Extracellular. A helical membrane pass occupies residues 82–102 (WPSVLLAVAGGVLLSIGNLAT). At 103-104 (QY) the chain is on the cytoplasmic side. The helical transmembrane segment at 105–125 (AFAFVGLSVTEVITASITVVI) threads the bilayer. At 126–141 (GTTLNYFLDNKINKAE) the chain is on the extracellular side. A helical transmembrane segment spans residues 142 to 162 (ILFPGVGCFLIAVFLGAAVHA). The Cytoplasmic portion of the chain corresponds to 163–231 (SNAADVKEKL…KRAIKVFGKS (69 aa)). ATP is bound at residue 224-231 (AIKVFGKS). A helical transmembrane segment spans residues 232–252 (IMIGLFITLFAGISLSLFSPA). At 253 to 275 (FNLATNDQWSTLPKGVPKLVVYT) the chain is on the extracellular side. The helical transmembrane segment at 276–296 (AFFYFSIAGFLISLILNLIFL) threads the bilayer. Topologically, residues 297 to 318 (YRPMVGLARSSLKKYIYDSKGR) are cytoplasmic. Residues 319-339 (GWAVFAGFLCGFGNGLQFMGG) form a helical membrane-spanning segment. The Extracellular portion of the chain corresponds to 340–344 (QAAGY). Residues 345 to 365 (AAADSVQALPLVSTFWGIVLF) traverse the membrane as a helical segment. The Cytoplasmic segment spans residues 366–374 (GEYRKSSKR). The chain crosses the membrane as a helical span at residues 375-395 (TYALLVSMLAMFVAAVAILMA). Residues 396-401 (SSGHRK) are Extracellular-facing.

Belongs to the plant ureide permease (TC 2.A.7.19) family. Expressed in developing seedlings, flower filaments and stigma, and the top and bottom parts of carpels in siliques.

The protein localises to the membrane. Functionally, proton-coupled transporter that transports a wide spectrum of oxo derivatives of heterocyclic nitrogen compounds. The polypeptide is Ureide permease 4 (Arabidopsis thaliana (Mouse-ear cress)).